The primary structure comprises 340 residues: Phosphoribosylformylglycinamidine cyclo-ligase (340 aa).

The protein belongs to the AIR synthase family.

The protein localises to the cytoplasm. The catalysed reaction is 2-formamido-N(1)-(5-O-phospho-beta-D-ribosyl)acetamidine + ATP = 5-amino-1-(5-phospho-beta-D-ribosyl)imidazole + ADP + phosphate + H(+). The protein operates within purine metabolism; IMP biosynthesis via de novo pathway; 5-amino-1-(5-phospho-D-ribosyl)imidazole from N(2)-formyl-N(1)-(5-phospho-D-ribosyl)glycinamide: step 2/2. The polypeptide is Phosphoribosylformylglycinamidine cyclo-ligase (Streptococcus sanguinis (strain SK36)).